Consider the following 895-residue polypeptide: Putative endoplasmic reticulum metallopeptidase 1-B (895 aa).

The tract at residues 1–27 (MSTGIRRRHADEKKNILEKESLQNDET) is disordered. The Cytoplasmic portion of the chain corresponds to 1–39 (MSTGIRRRHADEKKNILEKESLQNDETQREMEKDISLLR). The span at 9-27 (HADEKKNILEKESLQNDET) shows a compositional bias: basic and acidic residues. A helical transmembrane segment spans residues 40–60 (PAHWNFIGLFFLVLIIGTTFL). The Lumenal portion of the chain corresponds to 61–374 (HKCLPEPKDP…KPAEYADRKT (314 aa)). An N-linked (GlcNAc...) asparagine glycan is attached at asparagine 156. Residues histidine 180 and aspartate 192 each coordinate Zn(2+). The Proton acceptor role is filled by glutamate 226. Positions 227, 253, and 329 each coordinate Zn(2+). The chain crosses the membrane as a helical span at residues 375–395 (VFFDFLGLFVIIYPLSIAHLV). Topologically, residues 396 to 424 (NMLTICTVIALMSHRFYSKTFITFLALRD) are cytoplasmic. Residues 425 to 445 (YVLTILTIALVLKAMTFMSLF) traverse the membrane as a helical segment. At 446–457 (TYGALRWYTRHW) the chain is on the lumenal side. The helical transmembrane segment at 458 to 478 (LALVAYGLPSVWAGISVQGLL) threads the bilayer. At 479 to 489 (TARLAPKAREE) the chain is on the cytoplasmic side. Residues 490–512 (YGSTLELIHLTLISGILLAFTYY) form a helical membrane-spanning segment. The Lumenal portion of the chain corresponds to 513–515 (DIA). A helical membrane pass occupies residues 516 to 538 (SGFLFALLLVPAIKSIITYFGAW). At 539 to 553 (PTCPTFNTILTLILS) the chain is on the cytoplasmic side. A helical membrane pass occupies residues 554–574 (FPGCAMAIYTTEMLLSIFIPI). The Lumenal segment spans residues 575–584 (MGRSSYNPEP). The helical transmembrane segment at 585-605 (AVSFFVAFSAGCIVLSLGGLV) threads the bilayer. The Cytoplasmic segment spans residues 606 to 619 (AKSRNSRSSNEAGL). A helical transmembrane segment spans residues 620 to 640 (LELIYNILGVLLVTLTILYVF). Residues 641–895 (SSFWPSPYRF…WNVDQVYKYF (255 aa)) lie on the Lumenal side of the membrane. N-linked (GlcNAc...) asparagine glycosylation is found at asparagine 679 and asparagine 796.

The protein belongs to the peptidase M28 family. Zn(2+) is required as a cofactor.

Its subcellular location is the endoplasmic reticulum membrane. This is Putative endoplasmic reticulum metallopeptidase 1-B from Caenorhabditis elegans.